The sequence spans 428 residues: Enolase (428 aa).

A (2R)-2-phosphoglycerate-binding site is contributed by Gln-173. Glu-217 acts as the Proton donor in catalysis. Mg(2+) is bound by residues Asp-253, Glu-294, and Asp-320. Positions 345, 374, 375, and 396 each coordinate (2R)-2-phosphoglycerate. Residue Lys-345 is the Proton acceptor of the active site.

The protein belongs to the enolase family. Requires Mg(2+) as cofactor.

It localises to the cytoplasm. It is found in the secreted. The protein localises to the cell surface. The catalysed reaction is (2R)-2-phosphoglycerate = phosphoenolpyruvate + H2O. It functions in the pathway carbohydrate degradation; glycolysis; pyruvate from D-glyceraldehyde 3-phosphate: step 4/5. Catalyzes the reversible conversion of 2-phosphoglycerate (2-PG) into phosphoenolpyruvate (PEP). It is essential for the degradation of carbohydrates via glycolysis. This chain is Enolase, found in Methanosarcina mazei (strain ATCC BAA-159 / DSM 3647 / Goe1 / Go1 / JCM 11833 / OCM 88) (Methanosarcina frisia).